We begin with the raw amino-acid sequence, 353 residues long: UPF0283 membrane protein YcjF (353 aa).

3 consecutive transmembrane segments (helical) span residues 70-90 (MVMGGLALFGASVVGQGVQWT), 100-120 (VALGGCAAGALIIGAGVGSVV), and 213-233 (ESTLMIAVSPLALVDMAFIAW).

This sequence belongs to the UPF0283 family.

It is found in the cell inner membrane. The chain is UPF0283 membrane protein YcjF from Shigella boydii serotype 4 (strain Sb227).